A 296-amino-acid chain; its full sequence is Peptide transport system permease protein SapC (296 aa).

The Cytoplasmic segment spans residues M1–P28. A helical transmembrane segment spans residues A29–I49. The Periplasmic portion of the chain corresponds to A50–T98. The helical transmembrane segment at V99 to V119 threads the bilayer. The 186-residue stretch at V99–G284 folds into the ABC transmembrane type-1 domain. At A120–H133 the chain is on the cytoplasmic side. The chain crosses the membrane as a helical span at residues I134–A154. Over G155 to D196 the chain is Periplasmic. Residues G197–V217 form a helical membrane-spanning segment. The Cytoplasmic portion of the chain corresponds to T218–R222. The helical transmembrane segment at A223 to L243 threads the bilayer. Topologically, residues P244–E257 are periplasmic. Residues L258–L278 traverse the membrane as a helical segment. Residues L279–E296 are Cytoplasmic-facing.

The protein belongs to the binding-protein-dependent transport system permease family. OppBC subfamily.

The protein localises to the cell inner membrane. In terms of biological role, involved in a peptide intake transport system that plays a role in the resistance to antimicrobial peptides. This is Peptide transport system permease protein SapC (sapC) from Salmonella typhi.